Reading from the N-terminus, the 311-residue chain is Reaction center protein L chain (311 aa).

A run of 3 helical transmembrane segments spans residues 68 to 90, 123 to 151, and 156 to 178; these read FWGFVSVIGIIFGSYFYINETIL, GFAWQMTVLFATIAFFGWMMRQVDISMKL, and HVPIAFGVAFSAWLVLQVIRPIA. Histidine 183 and histidine 213 together coordinate (7R,8Z)-bacteriochlorophyll b. A helical transmembrane segment spans residues 211–238; that stretch reads PFHAIGITGLFASTWLLACHGSLILSAA. Residue histidine 230 coordinates Fe cation. A ubiquinone is bound at residue phenylalanine 253. A helical membrane pass occupies residues 262–287; the sequence is GESGVHRLGYIFAIGGILSADLCILL. Position 267 (histidine 267) interacts with Fe cation.

This sequence belongs to the reaction center PufL/M/PsbA/D family. In terms of assembly, reaction center is composed of four bacteriochlorophylls, two bacteriopheophytins, two ubiquinones, one iron, and two highly hydrophobic polypeptide chains (designated L and M).

It localises to the cell membrane. The reaction center is a membrane-bound complex that mediates the initial photochemical event in the electron transfer process of photosynthesis. This is Reaction center protein L chain (pufL) from Chloroflexus aurantiacus (strain ATCC 29366 / DSM 635 / J-10-fl).